A 207-amino-acid polypeptide reads, in one-letter code: Large ribosomal subunit protein uL4 (207 aa).

The disordered stretch occupies residues 44-78 (MRQGTHKTKNRAEVSGGGRKPWRQKGTGRARQGSI).

The protein belongs to the universal ribosomal protein uL4 family. As to quaternary structure, part of the 50S ribosomal subunit.

Functionally, one of the primary rRNA binding proteins, this protein initially binds near the 5'-end of the 23S rRNA. It is important during the early stages of 50S assembly. It makes multiple contacts with different domains of the 23S rRNA in the assembled 50S subunit and ribosome. In terms of biological role, forms part of the polypeptide exit tunnel. The chain is Large ribosomal subunit protein uL4 from Geobacillus kaustophilus (strain HTA426).